A 671-amino-acid polypeptide reads, in one-letter code: Anti-sigma-I factor RsgI2 (671 aa).

The Cytoplasmic segment spans residues 1–57 (MSHYTGIILKLESDRAIVLTDGLDFMELKLKPGMQRGQHVIFDESDLYSAGLITRYK). The RsgI N-terminal anti-sigma domain maps to 4-51 (YTGIILKLESDRAIVLTDGLDFMELKLKPGMQRGQHVIFDESDLYSAG). Residues 58–78 (SIIMPFSAFAAAAAVFLVILF) form a helical membrane-spanning segment. Residues 79 to 671 (SLRFVSISQE…SGTLYWGIEP (593 aa)) are Extracellular-facing. 2 disordered regions span residues 290 to 323 (TEAQ…IPHT) and 359 to 505 (PVPV…APTE). Residues 359-379 (PVPVSTPKPVSTPAYSSTPTP) show a composition bias toward low complexity. Over residues 380–400 (ESTPVPVSTPKPASTPTPAST) the composition is skewed to pro residues. The span at 401–425 (PKPVSTPTHVSTPKPISTPTSTPRP) shows a compositional bias: low complexity. A compositionally biased stretch (pro residues) spans 426–446 (ASTPKPTSTPTPESTPKPTST). The segment covering 447–491 (PAPVSTPTSTPIPTYTSTPASTPIPAYTSTPTSIPTLTPATSPAP) has biased composition (low complexity). Over residues 492–502 (TSSPTPIPSPA) the composition is skewed to pro residues. Positions 508 to 671 (LLTKIELQAY…SGTLYWGIEP (164 aa)) constitute a CBM3 domain. The Ca(2+) site is built by Thr-554, Asp-556, Asp-637, Ser-640, and Asp-641.

Interacts (via RsgI N-terminal anti-sigma domain) with SigI2.

The protein resides in the cell membrane. Its function is as follows. Anti-sigma factor for SigI2. Negatively regulates SigI2 activity through direct interaction. Binding of the polysaccharide substrate to the extracellular C-terminal sensing domain of RsgI2 may induce a conformational change in its N-terminal cytoplasmic region, leading to the release and activation of SigI2. The chain is Anti-sigma-I factor RsgI2 from Acetivibrio thermocellus (strain ATCC 27405 / DSM 1237 / JCM 9322 / NBRC 103400 / NCIMB 10682 / NRRL B-4536 / VPI 7372) (Clostridium thermocellum).